We begin with the raw amino-acid sequence, 157 residues long: UPF0225 protein PA1039 (157 aa).

This sequence belongs to the UPF0225 family.

The chain is UPF0225 protein PA1039 from Pseudomonas aeruginosa (strain ATCC 15692 / DSM 22644 / CIP 104116 / JCM 14847 / LMG 12228 / 1C / PRS 101 / PAO1).